We begin with the raw amino-acid sequence, 1083 residues long: FACT complex subunit spt16 (1083 aa).

Ser437 is modified (phosphoserine). A coiled-coil region spans residues 466-504 (LESKLRNEINTEEKRKEHQRELAQQLNERAKDRLARQGN). Positions 923–1083 (FEQGGWTFLD…NGHKSKKSRH (161 aa)) are disordered. Positions 935–987 (SGSEGENETAESEEDEAYNPTDAESDEESDEDSEYSEASEDSEESDEDLGSDE) are enriched in acidic residues. The segment covering 988–1023 (ESGKDWSDLEREAAEEDRNHDYAADDKPRNGKFDSK) has biased composition (basic and acidic residues). The span at 1024–1033 (KHGKSSKHSP) shows a compositional bias: basic residues. Over residues 1058 to 1076 (SSKDKDRKRSRDDSRDNGH) the composition is skewed to basic and acidic residues.

Belongs to the peptidase M24 family. SPT16 subfamily. In terms of assembly, component of the FACT complex, a stable heterodimer of dre4/spt16 and Ssrp. Interacts with TRL/GAGA.

It localises to the nucleus. The protein resides in the chromosome. Functionally, component of the FACT complex, a general chromatin factor that acts to reorganize nucleosomes. The FACT complex is involved in multiple processes that require DNA as a template such as mRNA elongation, DNA replication and DNA repair. During transcription elongation the FACT complex acts as a histone chaperone that both destabilizes and restores nucleosomal structure. It facilitates the passage of RNA polymerase II and transcription by promoting the dissociation of one histone H2A-H2B dimer from the nucleosome, then subsequently promotes the reestablishment of the nucleosome following the passage of RNA polymerase II. The FACT complex is required for expression of Hox genes. The chain is FACT complex subunit spt16 (dre4) from Drosophila melanogaster (Fruit fly).